Reading from the N-terminus, the 713-residue chain is Probable tRNA (uracil-O(2)-)-methyltransferase (713 aa).

Disordered regions lie at residues 49–92 and 480–508; these read TLRS…REGT and LHSR…HDAG. Position 76 is a phosphoserine (S76). Residues 79 to 89 show a composition bias toward basic and acidic residues; the sequence is GEPESGPRASR. Phosphoserine is present on S489. The C3H1-type zinc-finger motif lies at 669–698; sequence FKTRICWFFAHHPDGCVLPAAQCPFAHGPE.

Belongs to the TRM44 family.

It localises to the cytoplasm. The enzyme catalyses uridine(44) in tRNA(Ser) + S-adenosyl-L-methionine = 2'-O-methyluridine(44) in tRNA(Ser) + S-adenosyl-L-homocysteine + H(+). Functionally, probable adenosyl-L-methionine (AdoMet)-dependent tRNA (uracil-O(2)-)-methyltransferase. This Mus musculus (Mouse) protein is Probable tRNA (uracil-O(2)-)-methyltransferase (Trmt44).